Reading from the N-terminus, the 280-residue chain is Probable endonuclease 4 (280 aa).

His69, His109, Glu145, Asp179, His182, His216, Asp229, His231, and Glu261 together coordinate Zn(2+).

It belongs to the AP endonuclease 2 family. The cofactor is Zn(2+).

It catalyses the reaction Endonucleolytic cleavage to 5'-phosphooligonucleotide end-products.. Functionally, endonuclease IV plays a role in DNA repair. It cleaves phosphodiester bonds at apurinic or apyrimidinic (AP) sites, generating a 3'-hydroxyl group and a 5'-terminal sugar phosphate. The protein is Probable endonuclease 4 of Actinobacillus pleuropneumoniae serotype 7 (strain AP76).